Here is a 143-residue protein sequence, read N- to C-terminus: Large ribosomal subunit protein uL11 (143 aa).

Belongs to the universal ribosomal protein uL11 family. In terms of assembly, part of the ribosomal stalk of the 50S ribosomal subunit. Interacts with L10 and the large rRNA to form the base of the stalk. L10 forms an elongated spine to which L12 dimers bind in a sequential fashion forming a multimeric L10(L12)X complex. One or more lysine residues are methylated.

Forms part of the ribosomal stalk which helps the ribosome interact with GTP-bound translation factors. This Chromobacterium violaceum (strain ATCC 12472 / DSM 30191 / JCM 1249 / CCUG 213 / NBRC 12614 / NCIMB 9131 / NCTC 9757 / MK) protein is Large ribosomal subunit protein uL11.